The chain runs to 75 residues: ORF2p protein (75 aa).

Positions 13–18 (WIGHPV) are important for viral replication in intestinal cells. The hydrophobic stretch at 23–45 (IVYLFVGFTPLTLETLHTLNYII) threads the membrane. The interval 53–75 (APRSPHSDPARMRIPTQPRKAPL) is disordered.

It is found in the host cytoplasmic vesicle membrane. Its function is as follows. Facilitates virus release from intestinal cells in vitro, possibly through the host autophagic pathway. This is ORF2p protein from Human enterovirus 71 (strain USA/BrCr/1970) (EV71).